Here is a 342-residue protein sequence, read N- to C-terminus: GTPase Obg (342 aa).

The region spanning 1–159 (MKFIDEAKIY…RWIRLELKLL (159 aa)) is the Obg domain. The 173-residue stretch at 160-332 (ADVGIIGLPN…LLYKIGEALK (173 aa)) folds into the OBG-type G domain. Residues 166–173 (GLPNVGKS), 191–195 (FTTLT), 214–217 (DIPG), 284–287 (NKTD), and 313–315 (SAA) contribute to the GTP site. Positions 173 and 193 each coordinate Mg(2+).

The protein belongs to the TRAFAC class OBG-HflX-like GTPase superfamily. OBG GTPase family. Monomer. It depends on Mg(2+) as a cofactor.

It localises to the cytoplasm. An essential GTPase which binds GTP, GDP and possibly (p)ppGpp with moderate affinity, with high nucleotide exchange rates and a fairly low GTP hydrolysis rate. Plays a role in control of the cell cycle, stress response, ribosome biogenesis and in those bacteria that undergo differentiation, in morphogenesis control. The polypeptide is GTPase Obg (Syntrophus aciditrophicus (strain SB)).